Here is a 124-residue protein sequence, read N- to C-terminus: V-type proton ATPase subunit F (124 aa).

This sequence belongs to the V-ATPase F subunit family. As to quaternary structure, V-ATPase is a heteromultimeric enzyme composed of a peripheral catalytic V1 complex (components A to H) attached to an integral membrane V0 proton pore complex (components: a, c, c', c'', d, e, f and VOA1).

It localises to the vacuole membrane. Its function is as follows. Subunit of the V1 complex of vacuolar(H+)-ATPase (V-ATPase), a multisubunit enzyme composed of a peripheral complex (V1) that hydrolyzes ATP and a membrane integral complex (V0) that translocates protons. V-ATPase is responsible for acidifying and maintaining the pH of intracellular compartments. The chain is V-type proton ATPase subunit F (vma-7) from Neurospora crassa (strain ATCC 24698 / 74-OR23-1A / CBS 708.71 / DSM 1257 / FGSC 987).